We begin with the raw amino-acid sequence, 1081 residues long: Zinc finger protein 827 (1081 aa).

Positions 1-10 (MPRRKQEQPK) are enriched in basic and acidic residues. The interval 1-14 (MPRRKQEQPKRLPS) is mediates direct interaction with RBBP4. A disordered region spans residues 1–77 (MPRRKQEQPK…DTSLGSTTPS (77 aa)). An RRK motif; mediates NuRD recruitment to telomeres motif is present at residues 3-5 (RRK). Positions 62-77 (EQSTSPDTSLGSTTPS) are enriched in polar residues. Residues Lys-176, Lys-216, and Lys-226 each participate in a glycyl lysine isopeptide (Lys-Gly) (interchain with G-Cter in SUMO2) cross-link. Disordered regions lie at residues 259–278 (KVSERSLTPGQEHPPPASSF) and 307–348 (SSLL…SLEL). The span at 327–344 (VTPPPPPPPPPPPPPPPQ) shows a compositional bias: pro residues. Residues Lys-360 and Lys-372 each participate in a glycyl lysine isopeptide (Lys-Gly) (interchain with G-Cter in SUMO2) cross-link. 3 consecutive C2H2-type zinc fingers follow at residues 374 to 396 (FQCPICGLVIKRKSYWKRHMVIH), 402 to 424 (HQCPLCPFRCARKDNLKSHMKVH), and 433 to 455 (FQCQLCPFTSSRHFSLKLHMRCH). Glycyl lysine isopeptide (Lys-Gly) (interchain with G-Cter in SUMO2) cross-links involve residues Lys-466, Lys-475, Lys-523, Lys-549, Lys-580, Lys-587, Lys-597, Lys-634, Lys-639, and Lys-658. Residue Lys-673 forms a Glycyl lysine isopeptide (Lys-Gly) (interchain with G-Cter in SUMO1); alternate linkage. Lys-673 is covalently cross-linked (Glycyl lysine isopeptide (Lys-Gly) (interchain with G-Cter in SUMO2); alternate). Residues Lys-704, Lys-710, Lys-742, Lys-778, and Lys-798 each participate in a glycyl lysine isopeptide (Lys-Gly) (interchain with G-Cter in SUMO2) cross-link. 2 C2H2-type zinc fingers span residues 817 to 839 (FPCDVCGKVFGRQQTLSRHLSLH) and 845 to 867 (YKCHLCPYAAKCRANLNQHLTVH). Residues Lys-870 and Lys-891 each participate in a glycyl lysine isopeptide (Lys-Gly) (interchain with G-Cter in SUMO2) cross-link. 2 consecutive C2H2-type zinc fingers follow at residues 897–919 (YSCHVCGFETELNVQFVSHMSLH) and 929–952 (ICCTACDFVTMEEAEIKTHIGTKH). Basic and acidic residues predominate over residues 947–960 (HIGTKHTGEDRKTP). Positions 947 to 996 (HIGTKHTGEDRKTPSESNSPSSSSLSALSDSANSKDDSDGSQKNKGGNNL) are disordered. A Glycyl lysine isopeptide (Lys-Gly) (interchain with G-Cter in SUMO2) cross-link involves residue Lys-958. Over residues 961–978 (SESNSPSSSSLSALSDSA) the composition is skewed to low complexity. The span at 979-988 (NSKDDSDGSQ) shows a compositional bias: basic and acidic residues. Lys-1014 participates in a covalent cross-link: Glycyl lysine isopeptide (Lys-Gly) (interchain with G-Cter in SUMO2). C2H2-type zinc fingers lie at residues 1019–1041 (FECVFCNFVCKTKNMFERHLQIH) and 1047–1069 (FECDVCHKFMKTPEQLLEHKKCH).

This sequence belongs to the krueppel C2H2-type zinc-finger protein family. As to quaternary structure, part of a transcription inhibitory ribonucleoprotein complex composed at least of the circular RNA circZNF827, HNRNPK and HNRNPL. Interacts with the nucleosome remodeling and histone deacetylase/NuRD complex. Interacts with RBBP4; the interaction is direct and recruits RBBP4, a component of the NuRD complex, to telomeres.

It localises to the nucleus. The protein resides in the chromosome. The protein localises to the telomere. As part of a ribonucleoprotein complex composed at least of HNRNPK, HNRNPL and the circular RNA circZNF827 that nucleates the complex on chromatin, may negatively regulate the transcription of genes involved in neuronal differentiation. Could also recruit the nucleosome remodeling and histone deacetylase/NuRD complex to telomeric regions of chromosomes to regulate chromatin remodeling as part of telomere maintenance. This Homo sapiens (Human) protein is Zinc finger protein 827 (ZNF827).